A 644-amino-acid polypeptide reads, in one-letter code: Exoribonuclease 2 (644 aa).

The region spanning 189–516 is the RNB domain; the sequence is RRDLTALDFV…NHRLLKAIIK (328 aa). Residues 561–643 enclose the S1 motif domain; the sequence is DTRFAAEIID…ETRSIIARPA (83 aa).

This sequence belongs to the RNR ribonuclease family. RNase II subfamily.

It is found in the cytoplasm. The enzyme catalyses Exonucleolytic cleavage in the 3'- to 5'-direction to yield nucleoside 5'-phosphates.. Functionally, involved in mRNA degradation. Hydrolyzes single-stranded polyribonucleotides processively in the 3' to 5' direction. The sequence is that of Exoribonuclease 2 from Klebsiella pneumoniae subsp. pneumoniae (strain ATCC 700721 / MGH 78578).